A 375-amino-acid polypeptide reads, in one-letter code: Chaperone protein DnaJ (375 aa).

In terms of domain architecture, J spans 5–70 (DYYSLLEVER…QKRAAYDRYG (66 aa)). Residues 135-213 (GKTVDIEIDV…CHGEGRCEKH (79 aa)) form a CR-type zinc finger. 8 residues coordinate Zn(2+): Cys148, Cys151, Cys165, Cys168, Cys187, Cys190, Cys201, and Cys204. 4 CXXCXGXG motif repeats span residues 148 to 155 (CDACHGSG), 165 to 172 (CDTCHGSG), 187 to 194 (CPVCQGKG), and 201 to 208 (CPECHGEG).

This sequence belongs to the DnaJ family. In terms of assembly, homodimer. It depends on Zn(2+) as a cofactor.

The protein localises to the cytoplasm. In terms of biological role, participates actively in the response to hyperosmotic and heat shock by preventing the aggregation of stress-denatured proteins and by disaggregating proteins, also in an autonomous, DnaK-independent fashion. Unfolded proteins bind initially to DnaJ; upon interaction with the DnaJ-bound protein, DnaK hydrolyzes its bound ATP, resulting in the formation of a stable complex. GrpE releases ADP from DnaK; ATP binding to DnaK triggers the release of the substrate protein, thus completing the reaction cycle. Several rounds of ATP-dependent interactions between DnaJ, DnaK and GrpE are required for fully efficient folding. Also involved, together with DnaK and GrpE, in the DNA replication of plasmids through activation of initiation proteins. This Zymomonas mobilis subsp. mobilis (strain ATCC 31821 / ZM4 / CP4) protein is Chaperone protein DnaJ.